The following is a 198-amino-acid chain: MNTGRGVGRVVVLSGPSAVGKSTVVRCLRERIPDLYFSVSATTRAPRPGEVDGVDYSFVTPEAFQQLIDDGALLEWAEIHGGLHRSGTPARPVREATVAGRPVLIEVDLAGARAVKQAMPEALSVFLAPPSWEVLERRLVGRGTETPDVMSRRLDTARTELAAQSDFDVVVVNSQLESACSELVSLLVGHTSAGTNPA.

Residues 8-188 enclose the Guanylate kinase-like domain; it reads GRVVVLSGPS…ACSELVSLLV (181 aa). Residue 15-22 coordinates ATP; it reads GPSAVGKS.

Belongs to the guanylate kinase family.

The protein resides in the cytoplasm. The enzyme catalyses GMP + ATP = GDP + ADP. Its function is as follows. Essential for recycling GMP and indirectly, cGMP. This chain is Guanylate kinase, found in Mycobacterium sp. (strain MCS).